Reading from the N-terminus, the 323-residue chain is Beta-ketoacyl-[acyl-carrier-protein] synthase III (323 aa).

Residues Cys-112 and His-250 contribute to the active site. An ACP-binding region spans residues 251-255 (QANYR). Asn-280 is a catalytic residue.

This sequence belongs to the thiolase-like superfamily. FabH family. Homodimer.

Its subcellular location is the cytoplasm. The catalysed reaction is malonyl-[ACP] + acetyl-CoA + H(+) = 3-oxobutanoyl-[ACP] + CO2 + CoA. Its pathway is lipid metabolism; fatty acid biosynthesis. In terms of biological role, catalyzes the condensation reaction of fatty acid synthesis by the addition to an acyl acceptor of two carbons from malonyl-ACP. Catalyzes the first condensation reaction which initiates fatty acid synthesis and may therefore play a role in governing the total rate of fatty acid production. Possesses both acetoacetyl-ACP synthase and acetyl transacylase activities. Its substrate specificity determines the biosynthesis of branched-chain and/or straight-chain of fatty acids. This chain is Beta-ketoacyl-[acyl-carrier-protein] synthase III, found in Clostridium beijerinckii (strain ATCC 51743 / NCIMB 8052) (Clostridium acetobutylicum).